The following is a 342-amino-acid chain: Dual-specificity RNA methyltransferase RlmN (342 aa).

The Proton acceptor role is filled by Glu92. Residues 98–329 (DLPRSTLCVS…THVRRSRGGE (232 aa)) enclose the Radical SAM core domain. A disulfide bridge links Cys105 with Cys334. [4Fe-4S] cluster-binding residues include Cys112, Cys116, and Cys119. Residues 161–162 (GE), Ser193, 215–217 (SLH), and Asn291 each bind S-adenosyl-L-methionine. Catalysis depends on Cys334, which acts as the S-methylcysteine intermediate.

It belongs to the radical SAM superfamily. RlmN family. [4Fe-4S] cluster is required as a cofactor.

Its subcellular location is the cytoplasm. The catalysed reaction is adenosine(2503) in 23S rRNA + 2 reduced [2Fe-2S]-[ferredoxin] + 2 S-adenosyl-L-methionine = 2-methyladenosine(2503) in 23S rRNA + 5'-deoxyadenosine + L-methionine + 2 oxidized [2Fe-2S]-[ferredoxin] + S-adenosyl-L-homocysteine. It catalyses the reaction adenosine(37) in tRNA + 2 reduced [2Fe-2S]-[ferredoxin] + 2 S-adenosyl-L-methionine = 2-methyladenosine(37) in tRNA + 5'-deoxyadenosine + L-methionine + 2 oxidized [2Fe-2S]-[ferredoxin] + S-adenosyl-L-homocysteine. Specifically methylates position 2 of adenine 2503 in 23S rRNA and position 2 of adenine 37 in tRNAs. m2A2503 modification seems to play a crucial role in the proofreading step occurring at the peptidyl transferase center and thus would serve to optimize ribosomal fidelity. This chain is Dual-specificity RNA methyltransferase RlmN, found in Syntrophobacter fumaroxidans (strain DSM 10017 / MPOB).